The primary structure comprises 719 residues: DNA ligase (719 aa).

Residues 42-46 (DAAYD), 92-93 (SL), and E126 contribute to the NAD(+) site. K128 acts as the N6-AMP-lysine intermediate in catalysis. Residues R149, E185, K301, and K325 each coordinate NAD(+). Residues C430, C433, C448, and C454 each contribute to the Zn(2+) site. A BRCT domain is found at 640-719 (ATGSPVEGKT…DDWFKLVGED (80 aa)).

This sequence belongs to the NAD-dependent DNA ligase family. LigA subfamily. Mg(2+) serves as cofactor. Requires Mn(2+) as cofactor.

It catalyses the reaction NAD(+) + (deoxyribonucleotide)n-3'-hydroxyl + 5'-phospho-(deoxyribonucleotide)m = (deoxyribonucleotide)n+m + AMP + beta-nicotinamide D-nucleotide.. In terms of biological role, DNA ligase that catalyzes the formation of phosphodiester linkages between 5'-phosphoryl and 3'-hydroxyl groups in double-stranded DNA using NAD as a coenzyme and as the energy source for the reaction. It is essential for DNA replication and repair of damaged DNA. The sequence is that of DNA ligase from Brucella melitensis biotype 1 (strain ATCC 23456 / CCUG 17765 / NCTC 10094 / 16M).